The primary structure comprises 865 residues: Ribosome biogenesis protein BOP1 homolog (865 aa).

Disordered stretches follow at residues 1 to 195 and 207 to 240; these read MVAN…LKLG and KTRGLGVFPPVPKRKGKAAQDEYAAGDTSDEEDI. Acidic residues-rich tracts occupy residues 30-44, 57-79, and 87-159; these read LDESNDEDNSNESDY, NEGEDSSDSDGEYATDDDEDDVL, and DGEE…EEEA. Over residues 160-180 the composition is skewed to basic and acidic residues; it reads KENGKEKPAKAKAERKQREEQ. WD repeat units lie at residues 526 to 565, 567 to 607, 651 to 693, 696 to 734, 737 to 776, 780 to 819, and 835 to 865; these read GHTSLIRCISVEPKGEYIVTGSDDMTVKIWEISTARCIRT, PTGD…YMLV, THFR…SQVP, KSKGLIQCVLFHPIKPCLFVATQRHIRVYDLVKQLMMKK, PGCKWISSMAIHPKGDNLLIGTYEKRLMWFDLDLSTKPYQ, IHNAAIRSVAFHPRYPLFASAGDDRSVIVSHGMVYNDLLQ, and VNDFSVFDVVFHPTQPWVFSSGADNTVRLYT.

The protein belongs to the WD repeat BOP1/ERB1 family.

It localises to the nucleus. It is found in the nucleolus. The protein localises to the nucleoplasm. Required for maturation of ribosomal RNAs and formation of the large ribosomal subunit. The polypeptide is Ribosome biogenesis protein BOP1 homolog (Anopheles gambiae (African malaria mosquito)).